The following is a 368-amino-acid chain: DNA replication and repair protein RecF (368 aa).

30–37 (GDNGAGKT) serves as a coordination point for ATP.

This sequence belongs to the RecF family.

It localises to the cytoplasm. The RecF protein is involved in DNA metabolism; it is required for DNA replication and normal SOS inducibility. RecF binds preferentially to single-stranded, linear DNA. It also seems to bind ATP. This Xanthomonas oryzae pv. oryzae (strain KACC10331 / KXO85) protein is DNA replication and repair protein RecF.